We begin with the raw amino-acid sequence, 215 residues long: 3-isopropylmalate dehydratase small subunit (215 aa).

It belongs to the LeuD family. LeuD type 1 subfamily. As to quaternary structure, heterodimer of LeuC and LeuD.

It catalyses the reaction (2R,3S)-3-isopropylmalate = (2S)-2-isopropylmalate. Its pathway is amino-acid biosynthesis; L-leucine biosynthesis; L-leucine from 3-methyl-2-oxobutanoate: step 2/4. Its function is as follows. Catalyzes the isomerization between 2-isopropylmalate and 3-isopropylmalate, via the formation of 2-isopropylmaleate. This Saccharophagus degradans (strain 2-40 / ATCC 43961 / DSM 17024) protein is 3-isopropylmalate dehydratase small subunit.